Reading from the N-terminus, the 357-residue chain is D-alanine--D-alanine ligase A (357 aa).

The ATP-grasp domain occupies 143 to 348; the sequence is KRLLREAGLA…YSKVIDVLIE (206 aa). 171-226 lines the ATP pocket; the sequence is AGALGLPFFAKPARQGSSFGVSKVHDRDGFEQAVETALRYDSKALIEEFVDGREIE. Positions 302, 315, and 317 each coordinate Mg(2+).

It belongs to the D-alanine--D-alanine ligase family. Mg(2+) is required as a cofactor. Mn(2+) serves as cofactor.

The protein localises to the cytoplasm. It catalyses the reaction 2 D-alanine + ATP = D-alanyl-D-alanine + ADP + phosphate + H(+). It participates in cell wall biogenesis; peptidoglycan biosynthesis. Cell wall formation. This is D-alanine--D-alanine ligase A from Mesorhizobium japonicum (strain LMG 29417 / CECT 9101 / MAFF 303099) (Mesorhizobium loti (strain MAFF 303099)).